Consider the following 155-residue polypeptide: Fibroblast growth factor 2 (155 aa).

Positions 1–9 are excised as a propeptide; it reads MAAGSITTL. Residues 1–20 are disordered; sequence MAAGSITTLPALPEDGGSGA. Asn36 contacts heparin. Positions 46–48 match the Cell attachment site; atypical motif; sequence DGR. Tyr82 carries the phosphotyrosine; by TEC modification. Positions 88-90 match the Cell attachment site; atypical motif; it reads DGR. Lys95 is covalently cross-linked (Glycyl lysine isopeptide (Lys-Gly) (interchain with G-Cter in SUMO1)). Positions 128–144 are heparin-binding; the sequence is KRTGQYKLGPKTGPGQK.

Belongs to the heparin-binding growth factors family. In terms of assembly, monomer. Homodimer. Interacts with FGFR1, FGFR2, FGFR3 and FGFR4. Affinity between fibroblast growth factors (FGFs) and their receptors is increased by heparan sulfate glycosaminoglycans that function as coreceptors. Interacts with CSPG4, FGFBP1 and TEC. Found in a complex with FGFBP1, FGF1 and FGF2. Interacts with FGFBP3. Interacts with integrin ITGAV:ITGB3; the interaction is required for FGF2 signaling. Interacts with SNORC (via the extracellular domain). Interacts with glypican GPC3. Phosphorylation at Tyr-82 regulates FGF2 unconventional secretion.

The protein resides in the secreted. Its subcellular location is the nucleus. In terms of biological role, acts as a ligand for FGFR1, FGFR2, FGFR3 and FGFR4. Also acts as an integrin ligand which is required for FGF2 signaling. Binds to integrin ITGAV:ITGB3. Plays an important role in the regulation of cell survival, cell division, cell differentiation and cell migration. Functions as a potent mitogen in vitro. Can induce angiogenesis. Mediates phosphorylation of ERK1/2 and thereby promotes retinal lens fiber differentiation. The chain is Fibroblast growth factor 2 (FGF2) from Bos taurus (Bovine).